Here is a 135-residue protein sequence, read N- to C-terminus: Prostate and breast cancer overexpressed gene 1 protein (135 aa).

Expressed in colon, prostate, small intestine, testis and spleen, with lower expression in thymus, ovary, and peripheral blood leukocytes. Up-regulated expression in prostate, breast, and bladder cancer, but not in lung and colon cancer.

The protein resides in the cytoplasm. It localises to the nucleus. This Homo sapiens (Human) protein is Prostate and breast cancer overexpressed gene 1 protein (PBOV1).